The chain runs to 404 residues: CD2 homolog (404 aa).

An N-terminal signal peptide occupies residues 1–16 (MFITLIFLSYINIVLS). Residues 17-225 (NNYWARLNET…QNYFLENIHT (209 aa)) lie on the Extracellular side of the membrane. N24, N87, N92, N96, N122, N139, N167, N193, N200, and N206 each carry an N-linked (GlcNAc...) asparagine; by host glycan. Intrachain disulfides connect C140–C207 and C147–C190. A helical transmembrane segment spans residues 226-246 (LFYIIIFIVSGLIASIFISII). Residues 247 to 404 (TFLSLRKRKK…ISLIHVDRII (158 aa)) are Cytoplasmic-facing. Residues 260 to 295 (EIESPPPESNEEEQCQHDDTTSIHEPSPREPLLPKP) are disordered. The segment covering 273–287 (QCQHDDTTSIHEPSP) has biased composition (basic and acidic residues). A run of 7 repeats spans residues 322 to 327 (NPCPPP), 328 to 333 (KPCPPP), 334 to 339 (KPCPPP), 340 to 345 (KPCPPP), 346 to 351 (KPCPPP), 352 to 357 (KPCPPP), and 358 to 363 (KPCPPP). Positions 322–363 (NPCPPPKPCPPPKPCPPPKPCPPPKPCPPPKPCPPPKPCPPP) are 7 X 6 AA tandem repeats of [KN]-P-C-P-P-P. The segment covering 357 to 388 (PKPCPPPKPCSSPESYSPPKPLPSIPLLPNIP) has biased composition (pro residues). The interval 357-390 (PKPCPPPKPCSSPESYSPPKPLPSIPLLPNIPPL) is disordered.

This sequence belongs to the asfivirus CD2 homolog protein family. As to quaternary structure, both glycosylated and nonglycosylated forms interact (via C-terminus) with the host AP-1 complex. Cleaved into two fragments of 63 kDa and 26 kDa containing respectively the glycosylated N-terminus and the nonglycosylated C-terminus. A full-length 89-kDa glycosylated form also exists.

The protein localises to the host membrane. Its subcellular location is the virion membrane. It is found in the host Golgi apparatus. May play an immunosuppressive role by inhibiting lymphocyte proliferation and subsequently facilitating viral replication and generalization of infection. Responsible for viral hemadsorption, which may help viral spread. Increases virus replication in the tick vector at the step of virus uptake or replication in the tick gut. May play a role in the host Golgi reorganization to yield viral factories. May play a role in host cell penetration. The sequence is that of CD2 homolog from African swine fever virus (isolate Tick/South Africa/Pretoriuskop Pr4/1996) (ASFV).